Consider the following 244-residue polypeptide: Ribonuclease 3 (244 aa).

The 128-residue stretch at 7 to 134 folds into the RNase III domain; that stretch reads FEEVEKTLNI…IIAAIYIDSG (128 aa). Glu-47 lines the Mg(2+) pocket. The active site involves Asp-51. Mg(2+)-binding residues include Asn-120 and Glu-123. Glu-123 is a catalytic residue. One can recognise a DRBM domain in the interval 161–230; it reads DYKTNLQEIV…AQDALKKLKS (70 aa).

The protein belongs to the ribonuclease III family. As to quaternary structure, homodimer. It depends on Mg(2+) as a cofactor.

The protein resides in the cytoplasm. The catalysed reaction is Endonucleolytic cleavage to 5'-phosphomonoester.. Functionally, digests double-stranded RNA. Involved in the processing of primary rRNA transcript to yield the immediate precursors to the large and small rRNAs (23S and 16S). Processes some mRNAs, and tRNAs when they are encoded in the rRNA operon. Processes pre-crRNA and tracrRNA of type II CRISPR loci if present in the organism. The chain is Ribonuclease 3 from Clostridium kluyveri (strain NBRC 12016).